A 199-amino-acid chain; its full sequence is Cutinase CUT1 (199 aa).

The N-terminal stretch at 1-18 is a signal peptide; that stretch reads MKFTTLATLALGAVSALA. The propeptide occupies 19–27; the sequence is APVTELESR. The residue at position 28 (glutamine 28) is a Pyrrolidone carboxylic acid. Cysteine 31 and cysteine 105 form a disulfide bridge. Serine 116 (nucleophile) is an active-site residue. Cysteines 164 and 171 form a disulfide. Aspartate 168 is an active-site residue. Histidine 181 serves as the catalytic Proton donor/acceptor.

It belongs to the cutinase family. Post-translationally, the 2 disulfide bonds play a critical role in holding the catalytic residues in juxta-position; reduction of the disulfide bridges results in the complete inactivation of the enzyme.

It catalyses the reaction cutin + H2O = cutin monomers.. Functionally, catalyzes the hydrolysis of complex carboxylic polyesters found in the cell wall of plants. Degrades cutin, a macromolecule that forms the structure of the plant cuticle. Also degrades suberin, a specialized macromolecule found in the cell wall of various plant tissues. The chain is Cutinase CUT1 from Coprinopsis cinerea (Inky cap fungus).